The following is a 528-amino-acid chain: Na(+)/H(+) antiporter NhaB (528 aa).

The next 11 membrane-spanning stretches (helical) occupy residues Ile10–Ile30, Tyr63–Ala83, Val96–Phe116, Val131–Ile165, Leu204–Pro224, Phe240–Leu260, Val305–Val325, Leu359–Ile379, Leu391–Gly411, Ala449–Ile469, and Met476–Glu496.

The protein belongs to the NhaB Na(+)/H(+) (TC 2.A.34) antiporter family.

The protein localises to the cell inner membrane. It carries out the reaction 2 Na(+)(in) + 3 H(+)(out) = 2 Na(+)(out) + 3 H(+)(in). In terms of biological role, na(+)/H(+) antiporter that extrudes sodium in exchange for external protons. This Shewanella sp. (strain W3-18-1) protein is Na(+)/H(+) antiporter NhaB.